The chain runs to 1765 residues: RANBP2-like and GRIP domain-containing protein 5/6 (1765 aa).

T19 carries the phosphothreonine modification. At S21 the chain carries Phosphoserine. TPR repeat units lie at residues 26 to 59 (SMKGFYFAKLYYEAKEYDLAKKYICTYINVQERD), 60 to 93 (PKAHRFLGLLYELEENTEKAVECYRRSVELNPTQ), and 648 to 681 (EDAHITFAMLDAVNGNIEDAVTAFESIKSVVSYW). 2 disordered regions span residues 760-804 (GPLY…PRWT) and 924-945 (FGISEPGNQEKKREKPLENDTG). Over residues 778–797 (STPSPTKYSLSPSKSYKYSP) the composition is skewed to low complexity. Basic and acidic residues predominate over residues 931–941 (NQEKKREKPLE). The region spanning 1036 to 1172 (HFEPVVQMPE…FEECQRLLLD (137 aa)) is the RanBD1 1 domain. Disordered regions lie at residues 1214 to 1247 (KVTEEENKGSGTGAAGASDTTIKPNAENTGPTLE) and 1306 to 1330 (AKLNQSGTSVGTDEESVVTQEEERD). Polar residues predominate over residues 1235–1244 (IKPNAENTGP). Residues 1317–1329 (TDEESVVTQEEER) are compositionally biased toward acidic residues. The RanBD1 2 domain occupies 1333–1469 (YFEPVVPLPD…FDEAKTAQEK (137 aa)). Positions 1580–1593 (NNSETSSVAQSGSE) are enriched in polar residues. A disordered region spans residues 1580–1621 (NNSETSSVAQSGSESKVEPKKCELSKNSDIEQSSDSKVKNLS). The span at 1594 to 1617 (SKVEPKKCELSKNSDIEQSSDSKV) shows a compositional bias: basic and acidic residues. In terms of domain architecture, GRIP spans 1702 to 1752 (REKSAANLEYLKNVLLQFIFLKPGSERERLLPVINTMLQLSPEEKGKLAAV).

In terms of tissue distribution, expressed in testis.

The protein resides in the cytoplasm. In Homo sapiens (Human), this protein is RANBP2-like and GRIP domain-containing protein 5/6 (RGPD5).